Reading from the N-terminus, the 223-residue chain is Endonuclease V (223 aa).

Positions 35 and 103 each coordinate Mg(2+).

It belongs to the endonuclease V family. It depends on Mg(2+) as a cofactor.

It localises to the cytoplasm. The catalysed reaction is Endonucleolytic cleavage at apurinic or apyrimidinic sites to products with a 5'-phosphate.. In terms of biological role, DNA repair enzyme involved in the repair of deaminated bases. Selectively cleaves double-stranded DNA at the second phosphodiester bond 3' to a deoxyinosine leaving behind the intact lesion on the nicked DNA. This chain is Endonuclease V, found in Shigella flexneri serotype 5b (strain 8401).